Here is a 138-residue protein sequence, read N- to C-terminus: NADH-quinone oxidoreductase subunit A 1 (138 aa).

3 consecutive transmembrane segments (helical) span residues 19 to 39, 74 to 94, and 103 to 123; these read FLPL…LLLA, FYLI…IFAW, and LAGL…LVWL.

This sequence belongs to the complex I subunit 3 family. NDH-1 is composed of 14 different subunits. Subunits NuoA, H, J, K, L, M, N constitute the membrane sector of the complex.

Its subcellular location is the cell inner membrane. It carries out the reaction a quinone + NADH + 5 H(+)(in) = a quinol + NAD(+) + 4 H(+)(out). In terms of biological role, NDH-1 shuttles electrons from NADH, via FMN and iron-sulfur (Fe-S) centers, to quinones in the respiratory chain. The immediate electron acceptor for the enzyme in this species is believed to be ubiquinone. Couples the redox reaction to proton translocation (for every two electrons transferred, four hydrogen ions are translocated across the cytoplasmic membrane), and thus conserves the redox energy in a proton gradient. This is NADH-quinone oxidoreductase subunit A 1 from Geobacter metallireducens (strain ATCC 53774 / DSM 7210 / GS-15).